The chain runs to 72 residues: MAKEDVIEVEGTVIEPLPNAMFRVELENGHKILAHVSGKIRMNFIRILPGDKVTVELSPYDLTRGRITYRYK.

An S1-like domain is found at 1–72 (MAKEDVIEVE…TRGRITYRYK (72 aa)). At tyrosine 60 the chain carries Phosphotyrosine.

The protein belongs to the IF-1 family. Component of the 30S ribosomal translation pre-initiation complex which assembles on the 30S ribosome in the order IF-2 and IF-3, IF-1 and N-formylmethionyl-tRNA(fMet); mRNA recruitment can occur at any time during PIC assembly.

Its subcellular location is the cytoplasm. One of the essential components for the initiation of protein synthesis. Stabilizes the binding of IF-2 and IF-3 on the 30S subunit to which N-formylmethionyl-tRNA(fMet) subsequently binds. Helps modulate mRNA selection, yielding the 30S pre-initiation complex (PIC). Upon addition of the 50S ribosomal subunit IF-1, IF-2 and IF-3 are released leaving the mature 70S translation initiation complex. This Shouchella clausii (strain KSM-K16) (Alkalihalobacillus clausii) protein is Translation initiation factor IF-1.